We begin with the raw amino-acid sequence, 81 residues long: Protein Vpu (81 aa).

Residues 1–7 (MQPLVIA) are Extracellular-facing. A helical membrane pass occupies residues 8 to 28 (AIVALVVAGIIAIVVWSIVFI). The Cytoplasmic portion of the chain corresponds to 29–81 (EYRKIRRQRKIDKLIDRISERAEDSGNESEGDQEELSALVGMGHDAPWVINDL). Residues serine 53 and serine 57 each carry the phosphoserine; by host CK2 modification.

Belongs to the HIV-1 VPU protein family. Homopentamer. Interacts with host CD4 and BRTC; these interactions induce proteasomal degradation of CD4. Interacts with host BST2; this interaction leads to the degradation of host BST2. Interacts with host FBXW11. Interacts with host AP1M1; this interaction plays a role in the mistrafficking and subsequent degradation of host BST2. Interacts with host RANBP2; this interaction allows Vpu to down-regulate host BLM sumoylation. Post-translationally, phosphorylated by host CK2. This phosphorylation is necessary for interaction with human BTRC and degradation of CD4.

It is found in the host membrane. With respect to regulation, ion channel activity is inhibited by hexamethylene amiloride in vitro. Its function is as follows. Enhances virion budding by targeting host CD4 and Tetherin/BST2 to proteasome degradation. Degradation of CD4 prevents any unwanted premature interactions between viral Env and its host receptor CD4 in the endoplasmic reticulum. Degradation of antiretroviral protein Tetherin/BST2 is important for virion budding, as BST2 tethers new viral particles to the host cell membrane. Mechanistically, Vpu bridges either CD4 or BST2 to BTRC, a substrate recognition subunit of the Skp1/Cullin/F-box protein E3 ubiquitin ligase, induces their ubiquitination and subsequent proteasomal degradation. The alteration of the E3 ligase specificity by Vpu seems to promote the degradation of host IKBKB, leading to NF-kappa-B down-regulation and subsequent apoptosis. Acts as a viroporin that forms an oligomeric ion channel in membranes. Modulates the host DNA repair mechanisms to promote degradation of nuclear viral cDNA in cells that are already productively infected in order to suppress immune sensing and proviral hyper-integration (superinfection). Manipulates PML-NBs and modulates SUMOylation of host BLM protein thereby enhancing its DNA-end processing activity toward viral unintegrated linear DNA. Also inhibits RAD52-mediated homologous repair of viral cDNA, preventing the generation of dead-end circular forms of single copies of the long terminal repeat and permitting sustained nucleolytic attack. The chain is Protein Vpu from Homo sapiens (Human).